Reading from the N-terminus, the 204-residue chain is HTH-type transcriptional repressor KstR2 (204 aa).

Residues 13-73 (SGRRTELLDI…EILRGFLDDL (61 aa)) enclose the HTH tetR-type domain. The H-T-H motif DNA-binding region spans 36–55 (TVRDIADAAGILSGSLYHHF).

Homodimer.

Controls the expression of a small regulon that may play a role in the utilization of cholesterol. This is HTH-type transcriptional repressor KstR2 (kstR2) from Rhodococcus jostii (strain RHA1).